Here is a 280-residue protein sequence, read N- to C-terminus: F-box only protein 27 (280 aa).

A disordered region spans residues 1–26; that stretch reads MGAWASRGRAARVPAPEPESEPEEAL. The region spanning 25 to 72 is the F-box domain; it reads ALDLSQLPPELLLVVLSHVPPRTLLGRCRQVCRGWRALVDGQALWLLI. One can recognise an FBA domain in the interval 100-277; that stretch reads PCPLGRFCAR…VTNSSVIVRV (178 aa).

Part of a SCF (SKP1-cullin-F-box) protein ligase complex. Interacts with SKP1 and CUL1.

Functionally, substrate-recognition component of the SCF (SKP1-CUL1-F-box protein)-type E3 ubiquitin ligase complex. Able to recognize and bind complex-type oligosaccharides. The protein is F-box only protein 27 (FBXO27) of Macaca fascicularis (Crab-eating macaque).